Here is a 301-residue protein sequence, read N- to C-terminus: Recombination-associated protein RdgC (301 aa).

This sequence belongs to the RdgC family.

It localises to the cytoplasm. The protein resides in the nucleoid. In terms of biological role, may be involved in recombination. This is Recombination-associated protein RdgC from Xanthomonas oryzae pv. oryzae (strain MAFF 311018).